Here is a 701-residue protein sequence, read N- to C-terminus: Elongation factor G (701 aa).

The 284-residue stretch at 8 to 291 folds into the tr-type G domain; that stretch reads GRYRNIGIVA…AVIDYLPAPT (284 aa). Residues 17-24, 89-93, and 143-146 contribute to the GTP site; these read AHVDAGKT, DTPGH, and NKMD.

The protein belongs to the TRAFAC class translation factor GTPase superfamily. Classic translation factor GTPase family. EF-G/EF-2 subfamily.

It is found in the cytoplasm. In terms of biological role, catalyzes the GTP-dependent ribosomal translocation step during translation elongation. During this step, the ribosome changes from the pre-translocational (PRE) to the post-translocational (POST) state as the newly formed A-site-bound peptidyl-tRNA and P-site-bound deacylated tRNA move to the P and E sites, respectively. Catalyzes the coordinated movement of the two tRNA molecules, the mRNA and conformational changes in the ribosome. The protein is Elongation factor G of Pseudomonas syringae pv. syringae (strain B728a).